The sequence spans 195 residues: Pyridoxal 5'-phosphate synthase subunit PdxT (195 aa).

46–48 lines the L-glutamine pocket; that stretch reads GES. The Nucleophile role is filled by Cys-78. L-glutamine-binding positions include Arg-107 and 136-137; that span reads IR. Residues His-173 and Glu-175 each act as charge relay system in the active site.

It belongs to the glutaminase PdxT/SNO family. In terms of assembly, in the presence of PdxS, forms a dodecamer of heterodimers. Only shows activity in the heterodimer.

The enzyme catalyses aldehydo-D-ribose 5-phosphate + D-glyceraldehyde 3-phosphate + L-glutamine = pyridoxal 5'-phosphate + L-glutamate + phosphate + 3 H2O + H(+). The catalysed reaction is L-glutamine + H2O = L-glutamate + NH4(+). The protein operates within cofactor biosynthesis; pyridoxal 5'-phosphate biosynthesis. Catalyzes the hydrolysis of glutamine to glutamate and ammonia as part of the biosynthesis of pyridoxal 5'-phosphate. The resulting ammonia molecule is channeled to the active site of PdxS. In Dehalococcoides mccartyi (strain CBDB1), this protein is Pyridoxal 5'-phosphate synthase subunit PdxT.